We begin with the raw amino-acid sequence, 85 residues long: uncharacterized protein (85 aa).

The first 35 residues, methionine 1–alanine 35, serve as a signal peptide directing secretion.

Its subcellular location is the secreted. This is an uncharacterized protein from Dictyostelium discoideum (Social amoeba).